The sequence spans 231 residues: Cytochrome c oxidase subunit 2 (231 aa).

Residues 1-30 (MNNFFQGYNLLFQHSLFASYMDWFHAFNCS) are Mitochondrial intermembrane-facing. Residues 31-51 (LLLGVLVFVTLLFGYLIFSTF) traverse the membrane as a helical segment. The Mitochondrial matrix segment spans residues 52–64 (YFKSKKIEYQFGE). The helical transmembrane segment at 65-85 (LLCSIFPTIILLMQMVPSLSL) threads the bilayer. Topologically, residues 86 to 231 (LYYYGLMNLD…FKSWCFGTME (146 aa)) are mitochondrial intermembrane. Cu cation-binding residues include histidine 164, cysteine 199, glutamate 201, cysteine 203, histidine 207, and methionine 210. Glutamate 201 lines the Mg(2+) pocket.

This sequence belongs to the cytochrome c oxidase subunit 2 family. As to quaternary structure, component of the cytochrome c oxidase (complex IV, CIV), a multisubunit enzyme composed of a catalytic core of 3 subunits and several supernumerary subunits. The complex exists as a monomer or a dimer and forms supercomplexes (SCs) in the inner mitochondrial membrane with ubiquinol-cytochrome c oxidoreductase (cytochrome b-c1 complex, complex III, CIII). The cofactor is Cu cation.

The protein resides in the mitochondrion inner membrane. The catalysed reaction is 4 Fe(II)-[cytochrome c] + O2 + 8 H(+)(in) = 4 Fe(III)-[cytochrome c] + 2 H2O + 4 H(+)(out). Functionally, component of the cytochrome c oxidase, the last enzyme in the mitochondrial electron transport chain which drives oxidative phosphorylation. The respiratory chain contains 3 multisubunit complexes succinate dehydrogenase (complex II, CII), ubiquinol-cytochrome c oxidoreductase (cytochrome b-c1 complex, complex III, CIII) and cytochrome c oxidase (complex IV, CIV), that cooperate to transfer electrons derived from NADH and succinate to molecular oxygen, creating an electrochemical gradient over the inner membrane that drives transmembrane transport and the ATP synthase. Cytochrome c oxidase is the component of the respiratory chain that catalyzes the reduction of oxygen to water. Electrons originating from reduced cytochrome c in the intermembrane space (IMS) are transferred via the dinuclear copper A center (CU(A)) of subunit 2 and heme A of subunit 1 to the active site in subunit 1, a binuclear center (BNC) formed by heme A3 and copper B (CU(B)). The BNC reduces molecular oxygen to 2 water molecules using 4 electrons from cytochrome c in the IMS and 4 protons from the mitochondrial matrix. This chain is Cytochrome c oxidase subunit 2 (cox-2), found in Caenorhabditis briggsae.